We begin with the raw amino-acid sequence, 56 residues long: MAAPKKRTSKSRKNMRKSTWKRQAATQAKKALSLAKSIATGKSTIRGVQSNLSDES.

The span at 1 to 20 (MAAPKKRTSKSRKNMRKSTW) shows a compositional bias: basic residues. Residues 1–28 (MAAPKKRTSKSRKNMRKSTWKRQAATQA) are disordered.

Belongs to the bacterial ribosomal protein bL32 family.

The protein resides in the plastid. Its subcellular location is the chloroplast. In Mesostigma viride (Green alga), this protein is Large ribosomal subunit protein bL32c (rpl32).